The primary structure comprises 403 residues: Soluble calcium-activated nucleotidase 1 (403 aa).

The Cytoplasmic segment spans residues 1 to 44 (MPIQPFDQREWNEPMHSLRISVGGLPVLASMTKATDPRFRPRWR). A helical; Signal-anchor for type II membrane protein membrane pass occupies residues 45–61 (VILTSFVGAALLWLLYS). At 62–403 (HHQGPVPGRP…TVKYEGIEFI (342 aa)) the chain is on the lumenal side. The N-linked (GlcNAc...) asparagine glycan is linked to Asn-90. Ca(2+) is bound by residues Ser-170, Asp-171, Glu-217, Glu-286, Ser-347, and Glu-398.

The protein belongs to the apyrase family. As to quaternary structure, monomer. Homodimer; dimerization is Ca(2+)-dependent. Ca(2+) serves as cofactor.

It is found in the endoplasmic reticulum membrane. Its subcellular location is the golgi apparatus. The protein resides in the golgi stack membrane. It catalyses the reaction a ribonucleoside 5'-diphosphate + H2O = a ribonucleoside 5'-phosphate + phosphate + H(+). Calcium-dependent nucleotidase with a preference for UDP. The order of activity with different substrates is UDP &gt; GDP &gt; IDP &gt;&gt; UTP &gt; CDP = GTP = ITP. Has very low activity towards ADP and even lower activity towards ATP. Does not hydrolyze AMP and GMP. Involved in proteoglycan synthesis. In Mus musculus (Mouse), this protein is Soluble calcium-activated nucleotidase 1 (Cant1).